The chain runs to 136 residues: MSAALLRRGLELLAASEAPRDPPGQAKPRGAPVKRPRKTKAIQAQKLRNSAKGKVPKSALDEYRKRECRDHLRVNLKFLTRTRSTVAESVSQQILRQNRGRKACDRPVAKTKKKKAEGTVFTEEDFQKFQQEYFGS.

Arginine 7 is subject to Citrulline. The tract at residues 13-58 (LAASEAPRDPPGQAKPRGAPVKRPRKTKAIQAQKLRNSAKGKVPKS) is disordered. Position 84 is a phosphoserine (serine 84).

The protein belongs to the AROS family. In terms of assembly, part of the small subunit (SSU) processome, composed of more than 70 proteins and the RNA chaperone small nucleolar RNA (snoRNA) U3. Interacts with RPS19; the interaction is direct and mediates the integration of RPS19 in state post-A1. Interacts with SIRT1. In terms of processing, citrullinated by PADI4. In terms of tissue distribution, widely expressed (at protein level).

Its subcellular location is the nucleus. The protein localises to the nucleolus. Functionally, part of the small subunit (SSU) processome, first precursor of the small eukaryotic ribosomal subunit. During the assembly of the SSU processome in the nucleolus, many ribosome biogenesis factors, an RNA chaperone and ribosomal proteins associate with the nascent pre-rRNA and work in concert to generate RNA folding, modifications, rearrangements and cleavage as well as targeted degradation of pre-ribosomal RNA by the RNA exosome. Acts as a chaperone that specifically mediates the integration of RPS19 in state post-A1. Direct regulator of SIRT1. Enhances SIRT1-mediated deacetylation of p53/TP53, thereby participating in inhibition of p53/TP53-mediated transcriptional activity. This is Active regulator of SIRT1 from Homo sapiens (Human).